A 555-amino-acid polypeptide reads, in one-letter code: Branched-chain-amino-acid aminotransferase-like protein 1 (555 aa).

Belongs to the class-IV pyridoxal-phosphate-dependent aminotransferase family.

The polypeptide is Branched-chain-amino-acid aminotransferase-like protein 1 (Arabidopsis thaliana (Mouse-ear cress)).